We begin with the raw amino-acid sequence, 502 residues long: Lysine--tRNA ligase (502 aa).

Positions 411 and 418 each coordinate Mg(2+).

The protein belongs to the class-II aminoacyl-tRNA synthetase family. As to quaternary structure, homodimer. Mg(2+) is required as a cofactor.

It is found in the cytoplasm. The catalysed reaction is tRNA(Lys) + L-lysine + ATP = L-lysyl-tRNA(Lys) + AMP + diphosphate. The protein is Lysine--tRNA ligase of Chromohalobacter salexigens (strain ATCC BAA-138 / DSM 3043 / CIP 106854 / NCIMB 13768 / 1H11).